The chain runs to 239 residues: Ribosomal RNA small subunit methyltransferase G (239 aa).

Residues glycine 78, phenylalanine 83, 129–130 (AE), and arginine 148 each bind S-adenosyl-L-methionine.

Belongs to the methyltransferase superfamily. RNA methyltransferase RsmG family.

Its subcellular location is the cytoplasm. Its function is as follows. Specifically methylates the N7 position of a guanine in 16S rRNA. This Alkaliphilus metalliredigens (strain QYMF) protein is Ribosomal RNA small subunit methyltransferase G.